We begin with the raw amino-acid sequence, 232 residues long: Ubiquinone biosynthesis O-methyltransferase (232 aa).

R36, G55, D76, and M120 together coordinate S-adenosyl-L-methionine.

Belongs to the methyltransferase superfamily. UbiG/COQ3 family.

It carries out the reaction a 3-demethylubiquinol + S-adenosyl-L-methionine = a ubiquinol + S-adenosyl-L-homocysteine + H(+). The catalysed reaction is a 3-(all-trans-polyprenyl)benzene-1,2-diol + S-adenosyl-L-methionine = a 2-methoxy-6-(all-trans-polyprenyl)phenol + S-adenosyl-L-homocysteine + H(+). Its pathway is cofactor biosynthesis; ubiquinone biosynthesis. Its function is as follows. O-methyltransferase that catalyzes the 2 O-methylation steps in the ubiquinone biosynthetic pathway. This Paraburkholderia xenovorans (strain LB400) protein is Ubiquinone biosynthesis O-methyltransferase.